Consider the following 140-residue polypeptide: Putative nickel-responsive regulator (140 aa).

The Ni(2+) site is built by His76, His87, His89, and Cys95.

The protein belongs to the transcriptional regulatory CopG/NikR family. Ni(2+) serves as cofactor.

Transcriptional regulator. This chain is Putative nickel-responsive regulator, found in Rhodopseudomonas palustris (strain BisB5).